We begin with the raw amino-acid sequence, 1102 residues long: Probable ubiquitin-conjugating enzyme E2 23 (1102 aa).

Disordered regions lie at residues 1 to 20 (MEHE…DSSV), 25 to 111 (ASLS…DGNY), 396 to 418 (LPKV…PVHE), 579 to 602 (SPGN…SHQE), 661 to 710 (DESV…DIYA), and 760 to 800 (QAES…KNIL). Residues 31–44 (DSEHPNIYRQDIVK) show a composition bias toward basic and acidic residues. A compositionally biased stretch (acidic residues) spans 59–88 (GDSDSDSDISDEEEDDDDDEDNDDDDEDVE). Over residues 579–596 (SPGNSFEEATQQDNGYQD) the composition is skewed to polar residues. Over residues 779 to 800 (SKVNVTDNCESKGTQANAKNIL) the composition is skewed to polar residues. The UBC core domain occupies 850–1010 (QWFKKVDQDW…TFLLNCKTMM (161 aa)). The Glycyl thioester intermediate role is filled by Cys-936.

It belongs to the ubiquitin-conjugating enzyme family.

It catalyses the reaction S-ubiquitinyl-[E1 ubiquitin-activating enzyme]-L-cysteine + [E2 ubiquitin-conjugating enzyme]-L-cysteine = [E1 ubiquitin-activating enzyme]-L-cysteine + S-ubiquitinyl-[E2 ubiquitin-conjugating enzyme]-L-cysteine.. It functions in the pathway protein modification; protein ubiquitination. Functionally, accepts the ubiquitin from the E1 complex and catalyzes its covalent attachment to other proteins. This is Probable ubiquitin-conjugating enzyme E2 23 (UBC23) from Arabidopsis thaliana (Mouse-ear cress).